Reading from the N-terminus, the 490-residue chain is 5-hydroxytryptamine receptor 3A (490 aa).

The signal sequence occupies residues 1 to 19 (MVLWLQLALLALLLPTSLA). Topologically, residues 20–249 (QGEVRGKGTA…FYVVIRRRPL (230 aa)) are extracellular. Asn-33, Asn-109, Asn-175, and Asn-191 each carry an N-linked (GlcNAc...) asparagine glycan. Cys-162 and Cys-176 are joined by a disulfide. A helical membrane pass occupies residues 250–270 (FYAVTLLLPSIFLMIVDIVGF). Residues 271 to 285 (YLPPDSGERVSFKIT) are Cytoplasmic-facing. Residues 286–306 (LLLGYSVFLIIVSDTLPATAI) traverse the membrane as a helical segment. Over 307 to 312 (GTPLIS) the chain is Extracellular. A helical membrane pass occupies residues 313–333 (VYFVVCMALLVISLAETILIV). Over 334–467 (RLVHKQDLQQ…GSVLDKLLFR (134 aa)) the chain is Cytoplasmic. A disordered region spans residues 401–422 (GGPQDLEKTSRGRGSPPPPPRE). Residues 426–462 (AMCGLLQELASIRHFLEKREETREVARDWLRVGSVLD) form an HA-stretch; determines single-channel conductance in 5-HT3 receptors region. Residues 468–488 (VYLLAVLAYSITLVTLWSVWH) traverse the membrane as a helical segment. Residues 489–490 (YA) lie on the Extracellular side of the membrane.

The protein belongs to the ligand-gated ion channel (TC 1.A.9) family. 5-hydroxytryptamine receptor (TC 1.A.9.2) subfamily. HTR3A sub-subfamily. Forms homopentameric as well as heteropentameric serotonin-activated cation-selective channel complexes with HTR3B or HTR3C or HTR3D or HTR3E. The homomeric complex is functional but exhibits low conductance with modified voltage dependence, and decreased agonist and antagonist affinity. Heteropentameric complexes display properties which resemble that of neuronal serotonin-activated channels in vivo. Interacts with RIC3. Expressed in cortex, intestine and liver. Not expressed in muscle or spleen.

Its subcellular location is the postsynaptic cell membrane. The protein localises to the cell membrane. The catalysed reaction is Na(+)(in) = Na(+)(out). It catalyses the reaction K(+)(in) = K(+)(out). It carries out the reaction Ca(2+)(in) = Ca(2+)(out). The enzyme catalyses Mg(2+)(in) = Mg(2+)(out). Its function is as follows. Forms serotonin (5-hydroxytryptamine/5-HT3)-activated cation-selective channel complexes, which when activated cause fast, depolarizing responses in neurons. This is 5-hydroxytryptamine receptor 3A from Cavia porcellus (Guinea pig).